Reading from the N-terminus, the 474-residue chain is AAA-ATPase At3g28610 (474 aa).

The first 25 residues, 1–25, serve as a signal peptide directing secretion; the sequence is MMGNMFGSSLASLFFLWATIQQIFP. Residue 244 to 251 participates in ATP binding; the sequence is GPPGTGKS.

The protein belongs to the AAA ATPase family. BCS1 subfamily. It depends on Mg(2+) as a cofactor.

It carries out the reaction ATP + H2O = ADP + phosphate + H(+). This chain is AAA-ATPase At3g28610, found in Arabidopsis thaliana (Mouse-ear cress).